Reading from the N-terminus, the 385-residue chain is Serine/threonine-protein kinase 52 (385 aa).

The region spanning Leu-82–Leu-356 is the Protein kinase domain. ATP contacts are provided by residues Leu-88 to Val-96 and Lys-109. Asp-227 (proton acceptor) is an active-site residue.

This sequence belongs to the protein kinase superfamily. Ser/Thr protein kinase family. Binds to CBC1. Associates with PHOT1, PHOT2, BLUS1 and PM H(+)-ATPase (e.g. AHA1). Post-translationally, autophosphorylated. Phosphorylated by HT1 in response to low CO(2) concentrations. In terms of tissue distribution, expressed in guard cells.

It localises to the cytoplasm. The protein resides in the cytosol. It catalyses the reaction L-seryl-[protein] + ATP = O-phospho-L-seryl-[protein] + ADP + H(+). The enzyme catalyses L-threonyl-[protein] + ATP = O-phospho-L-threonyl-[protein] + ADP + H(+). Serine/threonine protein kinase that phosphorylates proteins on serine and threonine residues. Collectively with CBC1, acts as a negative regulator of stomatal opening, probably via the inhibition of plasma membrane-type ATPases (AHA1 and AHA2) activity in guard cells, but in an abscisic acid (ABA)-independent manner. However, at low concentrations of CO(2), together with CBC1, stimulates stomatal opening via the inhibition of S-type anion channels in response to blue light (BL) and red light (RL), thus being a key component to maximize photosynthesis in the light under low CO(2) conditions. Required for temperature decrease in leaves. Downstream target of HIGH LEAF TEMPERATURE1 (HT1) during low CO(2)-induced stomatal opening. In Arabidopsis thaliana (Mouse-ear cress), this protein is Serine/threonine-protein kinase 52.